Reading from the N-terminus, the 280-residue chain is MIQTLTDLSALRALVNGWKREGLRVALVPTMGNLHAGHYSLVMLARQYADRVVSSVFVNPTQFGPNEDFARYPRTPEADLRGLEDAGCDALWLPDVDTMYPLGTALATPIHAPGVSDVLEGECRPGHFDGVCTVVARLFNQVQPDVAAFGKKDYQQLAVIRQMVADLAFPIEILGGSIVREADGLAMSSRNQYLSAEDRPISSTIRKVLLQMRDSYAAGTPRAQVEDAASHTLEQAGFRVDYAVVRLPDLSEPGDSHAGARVALIAARLGNTRLIDNLEF.

31-38 (MGNLHAGH) contacts ATP. H38 functions as the Proton donor in the catalytic mechanism. Q62 lines the (R)-pantoate pocket. A beta-alanine-binding site is contributed by Q62. 150–153 (GKKD) serves as a coordination point for ATP. Position 156 (Q156) interacts with (R)-pantoate. ATP is bound by residues V179 and 187–190 (MSSR).

This sequence belongs to the pantothenate synthetase family. As to quaternary structure, homodimer.

It is found in the cytoplasm. It catalyses the reaction (R)-pantoate + beta-alanine + ATP = (R)-pantothenate + AMP + diphosphate + H(+). Its pathway is cofactor biosynthesis; (R)-pantothenate biosynthesis; (R)-pantothenate from (R)-pantoate and beta-alanine: step 1/1. Functionally, catalyzes the condensation of pantoate with beta-alanine in an ATP-dependent reaction via a pantoyl-adenylate intermediate. This chain is Pantothenate synthetase, found in Xanthomonas axonopodis pv. citri (strain 306).